The sequence spans 160 residues: 6,7-dimethyl-8-ribityllumazine synthase (160 aa).

5-amino-6-(D-ribitylamino)uracil-binding positions include Phe-22, 57–59 (TYE), and 81–83 (TII). Position 86–87 (86–87 (QT)) interacts with (2S)-2-hydroxy-3-oxobutyl phosphate. Catalysis depends on His-89, which acts as the Proton donor. Leu-114 is a binding site for 5-amino-6-(D-ribitylamino)uracil. Arg-128 contacts (2S)-2-hydroxy-3-oxobutyl phosphate.

Belongs to the DMRL synthase family. In terms of assembly, forms an icosahedral capsid composed of 60 subunits, arranged as a dodecamer of pentamers.

The catalysed reaction is (2S)-2-hydroxy-3-oxobutyl phosphate + 5-amino-6-(D-ribitylamino)uracil = 6,7-dimethyl-8-(1-D-ribityl)lumazine + phosphate + 2 H2O + H(+). It functions in the pathway cofactor biosynthesis; riboflavin biosynthesis; riboflavin from 2-hydroxy-3-oxobutyl phosphate and 5-amino-6-(D-ribitylamino)uracil: step 1/2. Its function is as follows. Catalyzes the formation of 6,7-dimethyl-8-ribityllumazine by condensation of 5-amino-6-(D-ribitylamino)uracil with 3,4-dihydroxy-2-butanone 4-phosphate. This is the penultimate step in the biosynthesis of riboflavin. The chain is 6,7-dimethyl-8-ribityllumazine synthase from Buchnera aphidicola subsp. Acyrthosiphon pisum (strain Tuc7).